The sequence spans 377 residues: tRNA-specific 2-thiouridylase MnmA (377 aa).

Residues 18–25 and M44 contribute to the ATP site; that span reads AMSGGVDS. C113 acts as the Nucleophile in catalysis. Residues C113 and C210 are joined by a disulfide bond. G137 lines the ATP pocket. The interval 159–161 is interaction with tRNA; that stretch reads RDQ. The Cysteine persulfide intermediate role is filled by C210.

Belongs to the MnmA/TRMU family.

It is found in the cytoplasm. It carries out the reaction S-sulfanyl-L-cysteinyl-[protein] + uridine(34) in tRNA + AH2 + ATP = 2-thiouridine(34) in tRNA + L-cysteinyl-[protein] + A + AMP + diphosphate + H(+). Its function is as follows. Catalyzes the 2-thiolation of uridine at the wobble position (U34) of tRNA, leading to the formation of s(2)U34. This chain is tRNA-specific 2-thiouridylase MnmA, found in Rhodospirillum rubrum (strain ATCC 11170 / ATH 1.1.1 / DSM 467 / LMG 4362 / NCIMB 8255 / S1).